The chain runs to 103 residues: MYAVFQSGGKQHRVSEGQTVRLEKLDIATGETVEFAEVLMIANGEEVKIGVPFVDGGVIKAEVVAHGRGEKVKIVKFRRRKHYRKQHGHRQWFTDVKITGISA.

Belongs to the bacterial ribosomal protein bL21 family. In terms of assembly, part of the 50S ribosomal subunit. Contacts protein L20.

In terms of biological role, this protein binds to 23S rRNA in the presence of protein L20. The chain is Large ribosomal subunit protein bL21 from Shigella sonnei (strain Ss046).